Reading from the N-terminus, the 332-residue chain is MASADRQMIGDATLAYDPRAKQKAAAKLARIPIKVEPGERLKKPDWIRVKAASPGTRFDDIKRILREHRLHTVCEEASCPNIGECFGKGTATFMIMGDKCTRRCPFCDVGHGRPDPLDQDEPMNLARTVAALALEYVVITSVDRDDLRDGGSGHFVDCIQSIRKLSPQTRIEILVPDFRGRDDRALAILQAAPPDVMNHNLETAPRLYPQARPGSDYRFSLNLLKKFKALHPTVPTKSGIMVGLGETDEEILQVMRDMRAHGIEMLTIGQYLAPSSSHLPVRRYVHPDDFRMFEQEAYRMGFSHAAVGAMVRSSYHADRQAQAAGLHVNAPK.

C74, C79, C85, C100, C104, C107, and S314 together coordinate [4Fe-4S] cluster. The Radical SAM core domain occupies 85–303 (CFGKGTATFM…EQEAYRMGFS (219 aa)).

The protein belongs to the radical SAM superfamily. Lipoyl synthase family. [4Fe-4S] cluster is required as a cofactor.

The protein localises to the cytoplasm. It catalyses the reaction [[Fe-S] cluster scaffold protein carrying a second [4Fe-4S](2+) cluster] + N(6)-octanoyl-L-lysyl-[protein] + 2 oxidized [2Fe-2S]-[ferredoxin] + 2 S-adenosyl-L-methionine + 4 H(+) = [[Fe-S] cluster scaffold protein] + N(6)-[(R)-dihydrolipoyl]-L-lysyl-[protein] + 4 Fe(3+) + 2 hydrogen sulfide + 2 5'-deoxyadenosine + 2 L-methionine + 2 reduced [2Fe-2S]-[ferredoxin]. It functions in the pathway protein modification; protein lipoylation via endogenous pathway; protein N(6)-(lipoyl)lysine from octanoyl-[acyl-carrier-protein]: step 2/2. In terms of biological role, catalyzes the radical-mediated insertion of two sulfur atoms into the C-6 and C-8 positions of the octanoyl moiety bound to the lipoyl domains of lipoate-dependent enzymes, thereby converting the octanoylated domains into lipoylated derivatives. This is Lipoyl synthase from Verminephrobacter eiseniae (strain EF01-2).